The following is a 440-amino-acid chain: Sorting nexin-31 (440 aa).

In terms of domain architecture, PX spans 1–109; that stretch reads MKMHFCIPVS…EFLKLAQLNT (109 aa).

This sequence belongs to the sorting nexin family. Interacts with CCDC22, CCDC93, VPS26C and VPS35L, associates with the retriever and CCC complexes.

Its function is as follows. May be involved in protein trafficking. In Homo sapiens (Human), this protein is Sorting nexin-31 (SNX31).